We begin with the raw amino-acid sequence, 2415 residues long: Spectrin alpha chain, erythrocytic 1 (2415 aa).

Spectrin repeat units lie at residues 52-152, 157-259, 263-365, 370-471, 475-576, 580-681, 686-787, 792-894, and 898-967; these read YHYQ…SDVL, KFYQ…ESLS, DLQR…AKLK, YHRF…HQYR, DFHL…RKLL, QLLQ…GTQL, QLLQ…KKKL, KLQQ…NDLK, and QLQQ…QQQQ. Residue S257 is modified to Phosphoserine. In terms of domain architecture, SH3 spans 975–1034; that stretch reads GREARVIALYDFEARSRREVSMKKNDVLTLLSSINKDWWKVEADDHQGFVPAVYVRKLAP. Residue S990 is modified to Phosphoserine. Spectrin repeat units lie at residues 1085-1177, 1183-1285, 1287-1390, 1394-1489, 1499-1603, 1606-1709, 1712-1815, 1818-1921, 1924-2029, 2040-2142, and 2154-2254; these read LAYE…YQLL, VEMF…SLNE, HKFF…KMLD, ELQL…QLLT, DLKQ…KLNE, RQQR…KLKE, ALFQ…NLEE, EYLQ…SQLD, HAFQ…KLLE, LFME…QELQ, and MCQE…NLEQ. S1972 is subject to Phosphoserine. EF-hand domains follow at residues 2267–2302, 2310–2345, and 2347–2382; these read ETLK…LNYY, EPEP…KESE, and IKTS…EQVS. Ca(2+)-binding residues include D2280, N2282, T2284, R2286, E2291, D2323, Y2329, and D2334.

Belongs to the spectrin family. In terms of assembly, composed of non-homologous chains, alpha and beta, which aggregate to form dimers, tetramers, and higher polymers. Interacts with FASLG. Interacts with BCAM.

It is found in the cytoplasm. The protein localises to the cytoskeleton. The protein resides in the cell cortex. Spectrin is the major constituent of the cytoskeletal network underlying the erythrocyte plasma membrane. It associates with band 4.1 and actin to form the cytoskeletal superstructure of the erythrocyte plasma membrane. The sequence is that of Spectrin alpha chain, erythrocytic 1 (Spta1) from Mus musculus (Mouse).